The primary structure comprises 47 residues: Photosystem II reaction center protein K (47 aa).

Residues 1 to 10 constitute a propeptide that is removed on maturation; the sequence is MAVYTLDLLA. Residues 19-39 traverse the membrane as a helical segment; sequence FGPLIDILPIIPLFFLLLAFV.

The protein belongs to the PsbK family. PSII is composed of 1 copy each of membrane proteins PsbA, PsbB, PsbC, PsbD, PsbE, PsbF, PsbH, PsbI, PsbJ, PsbK, PsbL, PsbM, PsbT, PsbX, PsbY, PsbZ, Psb30/Ycf12, peripheral proteins PsbO, CyanoQ (PsbQ), PsbU, PsbV and a large number of cofactors. It forms dimeric complexes.

The protein localises to the cellular thylakoid membrane. Functionally, one of the components of the core complex of photosystem II (PSII). PSII is a light-driven water:plastoquinone oxidoreductase that uses light energy to abstract electrons from H(2)O, generating O(2) and a proton gradient subsequently used for ATP formation. It consists of a core antenna complex that captures photons, and an electron transfer chain that converts photonic excitation into a charge separation. This is Photosystem II reaction center protein K from Synechococcus sp. (strain CC9311).